A 55-amino-acid chain; its full sequence is Light-harvesting polypeptide B-800/860 beta chain (55 aa).

Over 1 to 21 (ADANKVWPTGLTVAEAEELHT) the chain is Cytoplasmic. The helical transmembrane segment at 22 to 44 (YVTNGFRVFVGIAVVAHVLVFAA) threads the bilayer. His-38 contacts a bacteriochlorophyll. The Periplasmic portion of the chain corresponds to 45–55 (HPWGRGGALVA).

Belongs to the antenna complex beta subunit family. In terms of assembly, the core complex is formed by different alpha and beta chains, binding bacteriochlorophyll molecules, and arranged most probably in tetrameric structures disposed around the reaction center. The non-pigmented gamma chains may constitute additional components.

The protein resides in the cell inner membrane. Antenna complexes are light-harvesting systems, which transfer the excitation energy to the reaction centers. This Rhodocyclus tenuis (Rhodospirillum tenue) protein is Light-harvesting polypeptide B-800/860 beta chain.